A 275-amino-acid polypeptide reads, in one-letter code: Large ribosomal subunit protein uL2 (275 aa).

A disordered region spans residues 214-275 (RWRGNRPTVR…NKFILSHRNK (62 aa)). The span at 255–275 (KGKKTRSNKRTNKFILSHRNK) shows a compositional bias: basic residues.

It belongs to the universal ribosomal protein uL2 family. In terms of assembly, part of the 50S ribosomal subunit. Forms a bridge to the 30S subunit in the 70S ribosome.

Its function is as follows. One of the primary rRNA binding proteins. Required for association of the 30S and 50S subunits to form the 70S ribosome, for tRNA binding and peptide bond formation. It has been suggested to have peptidyltransferase activity; this is somewhat controversial. Makes several contacts with the 16S rRNA in the 70S ribosome. The chain is Large ribosomal subunit protein uL2 from Blochmanniella pennsylvanica (strain BPEN).